The following is a 181-amino-acid chain: Oligoribonuclease (181 aa).

The region spanning 8 to 171 is the Exonuclease domain; the sequence is LIWIDLEMTG…DDIRESIAEL (164 aa). Residue Y129 is part of the active site.

This sequence belongs to the oligoribonuclease family.

Its subcellular location is the cytoplasm. Its function is as follows. 3'-to-5' exoribonuclease specific for small oligoribonucleotides. The chain is Oligoribonuclease from Vibrio vulnificus (strain CMCP6).